The sequence spans 537 residues: Putative cysteine ligase BshC (537 aa).

A coiled-coil region spans residues 422 to 450; it reads IEKVEGMIEQQRRLNKDLLDEVAGNQNNI.

Belongs to the BshC family.

Its function is as follows. Involved in bacillithiol (BSH) biosynthesis. May catalyze the last step of the pathway, the addition of cysteine to glucosamine malate (GlcN-Mal) to generate BSH. This chain is Putative cysteine ligase BshC, found in Staphylococcus aureus (strain USA300).